The primary structure comprises 380 residues: ATPase ASNA1 homolog (380 aa).

48–55 (KGGVGKTT) serves as a coordination point for ATP. D77 is an active-site residue. E248 and N275 together coordinate ATP.

It belongs to the arsA ATPase family. Homodimer.

It is found in the cytoplasm. The protein resides in the endoplasmic reticulum. ATPase required for the post-translational delivery of tail-anchored (TA) proteins to the endoplasmic reticulum. Recognizes and selectively binds the transmembrane domain of TA proteins in the cytosol. This complex then targets to the endoplasmic reticulum by membrane-bound receptors, where the tail-anchored protein is released for insertion. This process is regulated by ATP binding and hydrolysis. ATP binding drives the homodimer towards the closed dimer state, facilitating recognition of newly synthesized TA membrane proteins. ATP hydrolysis is required for insertion. Subsequently, the homodimer reverts towards the open dimer state, lowering its affinity for the membrane-bound receptor, and returning it to the cytosol to initiate a new round of targeting. This Plasmodium chabaudi chabaudi protein is ATPase ASNA1 homolog.